Consider the following 332-residue polypeptide: tRNA-dihydrouridine synthase B (332 aa).

FMN contacts are provided by residues 16–18 (PMA) and glutamine 70. Cysteine 100 functions as the Proton donor in the catalytic mechanism. FMN is bound by residues lysine 139, 200 to 202 (NGD), and 224 to 225 (GR).

It belongs to the Dus family. DusB subfamily. FMN serves as cofactor.

It catalyses the reaction a 5,6-dihydrouridine in tRNA + NAD(+) = a uridine in tRNA + NADH + H(+). The enzyme catalyses a 5,6-dihydrouridine in tRNA + NADP(+) = a uridine in tRNA + NADPH + H(+). Its function is as follows. Catalyzes the synthesis of 5,6-dihydrouridine (D), a modified base found in the D-loop of most tRNAs, via the reduction of the C5-C6 double bond in target uridines. The sequence is that of tRNA-dihydrouridine synthase B from Xanthomonas axonopodis pv. citri (strain 306).